A 457-amino-acid polypeptide reads, in one-letter code: tRNA-2-methylthio-N(6)-dimethylallyladenosine synthase (457 aa).

The MTTase N-terminal domain maps to 3 to 120 (KKVYVKTFGC…LPQMIDARRE (118 aa)). [4Fe-4S] cluster-binding residues include cysteine 12, cysteine 49, cysteine 83, cysteine 157, cysteine 161, and cysteine 164. A Radical SAM core domain is found at 143–377 (RVEGPSAFVS…QATIEENVAR (235 aa)). In terms of domain architecture, TRAM spans 380 to 447 (QSMLGKVERI…PHSLRGELVL (68 aa)).

It belongs to the methylthiotransferase family. MiaB subfamily. As to quaternary structure, monomer. It depends on [4Fe-4S] cluster as a cofactor.

Its subcellular location is the cytoplasm. The enzyme catalyses N(6)-dimethylallyladenosine(37) in tRNA + (sulfur carrier)-SH + AH2 + 2 S-adenosyl-L-methionine = 2-methylsulfanyl-N(6)-dimethylallyladenosine(37) in tRNA + (sulfur carrier)-H + 5'-deoxyadenosine + L-methionine + A + S-adenosyl-L-homocysteine + 2 H(+). Its function is as follows. Catalyzes the methylthiolation of N6-(dimethylallyl)adenosine (i(6)A), leading to the formation of 2-methylthio-N6-(dimethylallyl)adenosine (ms(2)i(6)A) at position 37 in tRNAs that read codons beginning with uridine. This chain is tRNA-2-methylthio-N(6)-dimethylallyladenosine synthase, found in Burkholderia thailandensis (strain ATCC 700388 / DSM 13276 / CCUG 48851 / CIP 106301 / E264).